We begin with the raw amino-acid sequence, 346 residues long: GTPase Obg (346 aa).

Residues methionine 1–leucine 159 form the Obg domain. Residues lysine 122–glycine 147 form a disordered region. Positions serine 132–glycine 147 are enriched in basic and acidic residues. The 177-residue stretch at alanine 160–arginine 336 folds into the OBG-type G domain. GTP-binding positions include glycine 166 to serine 173, phenylalanine 191 to threonine 195, aspartate 218 to glycine 221, threonine 288 to aspartate 291, and serine 317 to alanine 319. Serine 173 and threonine 193 together coordinate Mg(2+).

This sequence belongs to the TRAFAC class OBG-HflX-like GTPase superfamily. OBG GTPase family. As to quaternary structure, monomer. It depends on Mg(2+) as a cofactor.

It localises to the cytoplasm. An essential GTPase which binds GTP, GDP and possibly (p)ppGpp with moderate affinity, with high nucleotide exchange rates and a fairly low GTP hydrolysis rate. Plays a role in control of the cell cycle, stress response, ribosome biogenesis and in those bacteria that undergo differentiation, in morphogenesis control. In Sorangium cellulosum (strain So ce56) (Polyangium cellulosum (strain So ce56)), this protein is GTPase Obg.